The chain runs to 37 residues: MKIRASVRKICEKCRLIRRRGRIIVICSNPRHKQRQG.

This sequence belongs to the bacterial ribosomal protein bL36 family.

Its subcellular location is the plastid. The protein resides in the chloroplast. In Lepidium virginicum (Virginia pepperweed), this protein is Large ribosomal subunit protein bL36c.